A 446-amino-acid chain; its full sequence is MSKKLYIKTYGCQMNVYDSVKMQDLLYPYGYEPTENIEEADVIILNTCHIREKAAEKTYSELGRIKKLQDARKKQGLNSAIIVVAGCVAQAEGEEIFTRTPYVDIVVGPQSYYNLPELISKVVRHEKHLIDLDFVEEAKFDQLPEQLYPQGASSFISVQEGCDKFCTFCVVPYTRGAEFSRNVEQVYREALKIVSSGAKEIMLLGQNVNAYHGKTSDDKVFTLADLIRHLVKIPNLERLRYTTSHPIDMTDDLISLHGLEPKLMPFLHLPVQSGSNKTLKAMNRKHDRDYYFDIIDRLRKARADIVLSSDFIVGFPGETDEDFADTLDLVRKVKYGQCYSFKYSPRPGTPGATRTDQVPEHIKSERLTILQKELAAQQLAFNESCIGSTMKVLFDRDGKFDDQIIGKTPYMQSVYIKNPNKDLLGKIIEVKITKAALNSLSGEIYR.

The region spanning 3–124 (KKLYIKTYGC…LPELISKVVR (122 aa)) is the MTTase N-terminal domain. [4Fe-4S] cluster contacts are provided by Cys-12, Cys-48, Cys-87, Cys-162, Cys-166, and Cys-169. The 233-residue stretch at 148 to 380 (YPQGASSFIS…QKELAAQQLA (233 aa)) folds into the Radical SAM core domain. Positions 383–446 (ESCIGSTMKV…LNSLSGEIYR (64 aa)) constitute a TRAM domain.

This sequence belongs to the methylthiotransferase family. MiaB subfamily. As to quaternary structure, monomer. It depends on [4Fe-4S] cluster as a cofactor.

It localises to the cytoplasm. It catalyses the reaction N(6)-dimethylallyladenosine(37) in tRNA + (sulfur carrier)-SH + AH2 + 2 S-adenosyl-L-methionine = 2-methylsulfanyl-N(6)-dimethylallyladenosine(37) in tRNA + (sulfur carrier)-H + 5'-deoxyadenosine + L-methionine + A + S-adenosyl-L-homocysteine + 2 H(+). Its function is as follows. Catalyzes the methylthiolation of N6-(dimethylallyl)adenosine (i(6)A), leading to the formation of 2-methylthio-N6-(dimethylallyl)adenosine (ms(2)i(6)A) at position 37 in tRNAs that read codons beginning with uridine. The protein is tRNA-2-methylthio-N(6)-dimethylallyladenosine synthase of Rickettsia bellii (strain RML369-C).